The primary structure comprises 123 residues: Small ribosomal subunit protein uS12 (123 aa).

Positions 1–21 (MPTIEQLVRKGRQAKPKKSKT) are disordered. Over residues 9-20 (RKGRQAKPKKSK) the composition is skewed to basic residues. Asp89 is modified (3-methylthioaspartic acid).

This sequence belongs to the universal ribosomal protein uS12 family. As to quaternary structure, part of the 30S ribosomal subunit. Contacts proteins S8 and S17. May interact with IF1 in the 30S initiation complex.

In terms of biological role, with S4 and S5 plays an important role in translational accuracy. Interacts with and stabilizes bases of the 16S rRNA that are involved in tRNA selection in the A site and with the mRNA backbone. Located at the interface of the 30S and 50S subunits, it traverses the body of the 30S subunit contacting proteins on the other side and probably holding the rRNA structure together. The combined cluster of proteins S8, S12 and S17 appears to hold together the shoulder and platform of the 30S subunit. The polypeptide is Small ribosomal subunit protein uS12 (Bifidobacterium longum subsp. infantis (strain ATCC 15697 / DSM 20088 / JCM 1222 / NCTC 11817 / S12)).